Consider the following 391-residue polypeptide: MVSVRCAECKGKLLCGRSKCPLLEKYRFLKEIKIDSRILDPSPPSIFVGRVGYPKVYAGPLVSINADPVYADSPWLWKSIEEVIRLRTSMLRVSRRFRVEDVREEKKELTEMQEMTAAIKPVDVEAEIRKISRKAEFDDVMQPMGYSAIAESIKLAENPKIPDKVEKVYYDDMKAYEALSYLYNHGFSTYYLQKIFSAGILGERKSRKLVPTRWSITAVHSIVGEAIKREIAAYKPIDKTLLFNYEHFGNHFEVILSPENYFFQLVEIWQRKSFWSPKEDWIGVDSEDIRPKRDYSNLSGGYYAARLPVLEYLREKRGQASVLVIREIKPSYYAPLGVWVVEEGVRKALKSKPEVFESFDDALTAASRRVENKEWRALVSRQTSLASFFGF.

Residues 6–20 (CAECKGKLLCGRSKC) form a C4-type zinc finger. Residues 382-389 (QTSLASFF) carry the PIP motif motif.

Belongs to the Nre family. Interacts with the DNA polymerase sliding clamp (PCNA) via the PIP (PCNA-interacting peptide) motif.

Involved in DNA damage repair. The protein is DNA repair protein NreA of Archaeoglobus fulgidus (strain ATCC 49558 / DSM 4304 / JCM 9628 / NBRC 100126 / VC-16).